The chain runs to 96 residues: Co-chaperonin GroES (96 aa).

Belongs to the GroES chaperonin family. As to quaternary structure, heptamer of 7 subunits arranged in a ring. Interacts with the chaperonin GroEL.

It is found in the cytoplasm. Together with the chaperonin GroEL, plays an essential role in assisting protein folding. The GroEL-GroES system forms a nano-cage that allows encapsulation of the non-native substrate proteins and provides a physical environment optimized to promote and accelerate protein folding. GroES binds to the apical surface of the GroEL ring, thereby capping the opening of the GroEL channel. This chain is Co-chaperonin GroES, found in Myxococcus xanthus (strain DK1622).